The sequence spans 189 residues: Elongation factor P (189 aa).

This sequence belongs to the elongation factor P family.

It is found in the cytoplasm. It functions in the pathway protein biosynthesis; polypeptide chain elongation. In terms of biological role, involved in peptide bond synthesis. Stimulates efficient translation and peptide-bond synthesis on native or reconstituted 70S ribosomes in vitro. Probably functions indirectly by altering the affinity of the ribosome for aminoacyl-tRNA, thus increasing their reactivity as acceptors for peptidyl transferase. This Campylobacter fetus subsp. fetus (strain 82-40) protein is Elongation factor P.